We begin with the raw amino-acid sequence, 1299 residues long: DExH-box ATP-dependent RNA helicase DExH6 (1299 aa).

Positions 15 to 82 (PTSVEATRIW…QRRLSIFKSR (68 aa)) constitute an R3H domain. The Helicase ATP-binding domain occupies 197–366 (TSAVESNQVI…FGGCPVVRVP (170 aa)). ATP is bound at residue 210-217 (GETGCGKT). The DEIH box motif lies at 313-316 (DEIH). Residues 537–711 (LIQQLMRKIC…ELCLQVKILD (175 aa)) enclose the Helicase C-terminal domain. Disordered regions lie at residues 987-1039 (PTGS…MMSS) and 1175-1299 (IPRQ…AEQK). A compositionally biased stretch (acidic residues) spans 992–1006 (DSDDSNEEEEDDEEV). Residues 1007 to 1020 (AANTNEEVAANTNE) are compositionally biased toward low complexity. The span at 1023-1032 (MDIHKEESRR) shows a compositional bias: basic and acidic residues. 3 stretches are compositionally biased toward polar residues: residues 1176–1193 (PRQQ…NNTD), 1204–1214 (NPTNRINQPEA), and 1239–1251 (PSDQ…QHNT). The short motif at 1182 to 1200 (KQRNPKATNNTDSGKKKEK) is the Bipartite nuclear localization signal element. The Bipartite nuclear localization signal motif lies at 1267–1283 (KKTKTRSGNNSDSGKKK). Over residues 1279–1299 (SGKKKEQYIPKRQREDKAEQK) the composition is skewed to basic and acidic residues.

The protein belongs to the DExH box helicase family. In terms of tissue distribution, specifically expressed in the tapetum and vascular tissues.

The protein localises to the nucleus. The catalysed reaction is ATP + H2O = ADP + phosphate + H(+). Its function is as follows. May function as an ATP-dependent RNA/DNA helicase. The polypeptide is DExH-box ATP-dependent RNA helicase DExH6 (Arabidopsis thaliana (Mouse-ear cress)).